The following is a 204-amino-acid chain: Ancillary SecYEG translocon subunit (204 aa).

Residues 1-23 lie on the Cytoplasmic side of the membrane; it reads MAYTIEEEQELTAIKAWWNENYK. Residues 24–44 traverse the membrane as a helical segment; that stretch reads FIIVCFVIAFGGVFGWNYWQS. Over 45-204 the chain is Periplasmic; the sequence is HQIQKMHKAS…QLIQVRLNNL (160 aa).

The protein belongs to the YfgM family. In terms of assembly, interacts with the SecYEG translocon. Forms a complex with PpiD.

Its subcellular location is the cell inner membrane. In terms of biological role, may mediate protein transfer from the SecYEG translocon to the periplasmic chaperone network via its periplasmic C-terminal region. The sequence is that of Ancillary SecYEG translocon subunit (1057) from Aggregatibacter actinomycetemcomitans (Actinobacillus actinomycetemcomitans).